A 124-amino-acid chain; its full sequence is Small ribosomal subunit protein uS12 (124 aa).

Aspartate 89 is subject to 3-methylthioaspartic acid. Position 108 is an N6-acetyllysine (lysine 108).

Belongs to the universal ribosomal protein uS12 family. Part of the 30S ribosomal subunit. Contacts proteins S8 and S17. May interact with IF1 in the 30S initiation complex.

Functionally, with S4 and S5 plays an important role in translational accuracy. Its function is as follows. Interacts with and stabilizes bases of the 16S rRNA that are involved in tRNA selection in the A site and with the mRNA backbone. Located at the interface of the 30S and 50S subunits, it traverses the body of the 30S subunit contacting proteins on the other side and probably holding the rRNA structure together. The combined cluster of proteins S8, S12 and S17 appears to hold together the shoulder and platform of the 30S subunit. In Escherichia coli (strain K12 / MC4100 / BW2952), this protein is Small ribosomal subunit protein uS12.